Reading from the N-terminus, the 304-residue chain is Putative S-adenosyl-L-methionine-dependent methyltransferase MAP_3385 (304 aa).

S-adenosyl-L-methionine-binding positions include aspartate 129 and 158 to 159 (DL).

This sequence belongs to the UPF0677 family.

Functionally, exhibits S-adenosyl-L-methionine-dependent methyltransferase activity. The sequence is that of Putative S-adenosyl-L-methionine-dependent methyltransferase MAP_3385 from Mycolicibacterium paratuberculosis (strain ATCC BAA-968 / K-10) (Mycobacterium paratuberculosis).